The following is a 426-amino-acid chain: Serine hydroxymethyltransferase (426 aa).

(6S)-5,6,7,8-tetrahydrofolate-binding positions include L122 and 126–128; that span reads GHL. The residue at position 231 (K231) is an N6-(pyridoxal phosphate)lysine.

It belongs to the SHMT family. Homodimer. It depends on pyridoxal 5'-phosphate as a cofactor.

It localises to the cytoplasm. It catalyses the reaction (6R)-5,10-methylene-5,6,7,8-tetrahydrofolate + glycine + H2O = (6S)-5,6,7,8-tetrahydrofolate + L-serine. It functions in the pathway one-carbon metabolism; tetrahydrofolate interconversion. It participates in amino-acid biosynthesis; glycine biosynthesis; glycine from L-serine: step 1/1. Its function is as follows. Catalyzes the reversible interconversion of serine and glycine with tetrahydrofolate (THF) serving as the one-carbon carrier. This reaction serves as the major source of one-carbon groups required for the biosynthesis of purines, thymidylate, methionine, and other important biomolecules. Also exhibits THF-independent aldolase activity toward beta-hydroxyamino acids, producing glycine and aldehydes, via a retro-aldol mechanism. The protein is Serine hydroxymethyltransferase of Koribacter versatilis (strain Ellin345).